A 135-amino-acid polypeptide reads, in one-letter code: Small ribosomal subunit protein uS9 (135 aa).

The segment covering 108–118 (VGDPRRTEPHK) has biased composition (basic and acidic residues). The tract at residues 108–135 (VGDPRRTEPHKPNRSTKGPRAKRQKSYR) is disordered. Basic residues predominate over residues 119–135 (PNRSTKGPRAKRQKSYR).

Belongs to the universal ribosomal protein uS9 family.

The sequence is that of Small ribosomal subunit protein uS9 (rps9) from Pyrococcus abyssi (strain GE5 / Orsay).